The primary structure comprises 388 residues: Chorismate synthase (388 aa).

Residues arginine 39 and arginine 45 each coordinate NADP(+). FMN contacts are provided by residues 132-134, 251-252, glycine 296, 311-315, and arginine 337; these read RSS, NA, and KPIPT.

Belongs to the chorismate synthase family. As to quaternary structure, homotetramer. The cofactor is FMNH2.

It catalyses the reaction 5-O-(1-carboxyvinyl)-3-phosphoshikimate = chorismate + phosphate. It functions in the pathway metabolic intermediate biosynthesis; chorismate biosynthesis; chorismate from D-erythrose 4-phosphate and phosphoenolpyruvate: step 7/7. Its function is as follows. Catalyzes the anti-1,4-elimination of the C-3 phosphate and the C-6 proR hydrogen from 5-enolpyruvylshikimate-3-phosphate (EPSP) to yield chorismate, which is the branch point compound that serves as the starting substrate for the three terminal pathways of aromatic amino acid biosynthesis. This reaction introduces a second double bond into the aromatic ring system. The sequence is that of Chorismate synthase from Staphylococcus aureus (strain MRSA252).